Reading from the N-terminus, the 224-residue chain is UPF0758 protein XF_0148 (224 aa).

The MPN domain occupies 102–224 (SIHDPISAGR…PVSFAEHGWL (123 aa)). Residues His-173, His-175, and Asp-186 each contribute to the Zn(2+) site. The JAMM motif motif lies at 173–186 (HNHPSGNREPSPAD).

This sequence belongs to the UPF0758 family.

This is UPF0758 protein XF_0148 from Xylella fastidiosa (strain 9a5c).